The following is a 356-amino-acid chain: Phosphate acyltransferase (356 aa).

It belongs to the PlsX family. In terms of assembly, homodimer. Probably interacts with PlsY.

The protein resides in the cytoplasm. It carries out the reaction a fatty acyl-[ACP] + phosphate = an acyl phosphate + holo-[ACP]. Its pathway is lipid metabolism; phospholipid metabolism. Functionally, catalyzes the reversible formation of acyl-phosphate (acyl-PO(4)) from acyl-[acyl-carrier-protein] (acyl-ACP). This enzyme utilizes acyl-ACP as fatty acyl donor, but not acyl-CoA. The sequence is that of Phosphate acyltransferase from Escherichia coli (strain 55989 / EAEC).